A 407-amino-acid polypeptide reads, in one-letter code: uncharacterized protein (407 aa).

Helical transmembrane passes span 13-30 (IVFT…SPFL), 40-62 (VTPL…YYVL), 67-89 (ILGM…YNII), 118-140 (LAFA…VFSG), 147-169 (VYER…IRRL), 179-199 (AVGL…YYNY), 253-271 (WISG…SVFV), 281-303 (TEII…FGPL), 334-356 (GYLI…EIIA), 361-378 (AFAF…LVSF), and 385-402 (QFLV…IVLF).

Its subcellular location is the cell membrane. This is an uncharacterized protein from Aquifex aeolicus (strain VF5).